Consider the following 100-residue polypeptide: NADH-quinone oxidoreductase subunit K (100 aa).

The next 3 membrane-spanning stretches (helical) occupy residues M1–G21, I28–A48, and F64–F84.

The protein belongs to the complex I subunit 4L family. In terms of assembly, NDH-1 is composed of 14 different subunits. Subunits NuoA, H, J, K, L, M, N constitute the membrane sector of the complex.

Its subcellular location is the cell inner membrane. The enzyme catalyses a quinone + NADH + 5 H(+)(in) = a quinol + NAD(+) + 4 H(+)(out). NDH-1 shuttles electrons from NADH, via FMN and iron-sulfur (Fe-S) centers, to quinones in the respiratory chain. The immediate electron acceptor for the enzyme in this species is believed to be ubiquinone. Couples the redox reaction to proton translocation (for every two electrons transferred, four hydrogen ions are translocated across the cytoplasmic membrane), and thus conserves the redox energy in a proton gradient. This is NADH-quinone oxidoreductase subunit K from Helicobacter pylori (strain G27).